A 264-amino-acid chain; its full sequence is Thymidylate synthase (264 aa).

DUMP is bound at residue R21. H51 is a binding site for (6R)-5,10-methylene-5,6,7,8-tetrahydrofolate. A dUMP-binding site is contributed by 126 to 127; sequence RR. C146 serves as the catalytic Nucleophile. Residues 166–169, N177, and 207–209 contribute to the dUMP site; these read RSAD and HIY. D169 lines the (6R)-5,10-methylene-5,6,7,8-tetrahydrofolate pocket. A263 lines the (6R)-5,10-methylene-5,6,7,8-tetrahydrofolate pocket.

Belongs to the thymidylate synthase family. Bacterial-type ThyA subfamily. As to quaternary structure, homodimer.

The protein localises to the cytoplasm. The enzyme catalyses dUMP + (6R)-5,10-methylene-5,6,7,8-tetrahydrofolate = 7,8-dihydrofolate + dTMP. It participates in pyrimidine metabolism; dTTP biosynthesis. Functionally, catalyzes the reductive methylation of 2'-deoxyuridine-5'-monophosphate (dUMP) to 2'-deoxythymidine-5'-monophosphate (dTMP) while utilizing 5,10-methylenetetrahydrofolate (mTHF) as the methyl donor and reductant in the reaction, yielding dihydrofolate (DHF) as a by-product. This enzymatic reaction provides an intracellular de novo source of dTMP, an essential precursor for DNA biosynthesis. The protein is Thymidylate synthase of Agrobacterium fabrum (strain C58 / ATCC 33970) (Agrobacterium tumefaciens (strain C58)).